The chain runs to 380 residues: MGAGGCISVSETKPNQKNSLERAPYDKPPFTISDLKKAIPPHLFKRSLIRSLSYVASDLTVAFLLYHATTYFHHLPQPFTALAWLAYWVAQGCVLTGVWVIGHECGHHGLSEYRGVDDTVGYILHSSLLVPYFSWKYSHRRHHSNTGSLDRDEVFVPKPRSKISWYSKYFNNPVGRIGVLFITLTLGWPLYLTFNVSGRPYDRFACHYSPNSPIYNNRERFQIYLSDIGIVITSLVLLRAAMVKGLVWLICVYGVPLMITNGFLVLVTYLQHTHPSLPHYDNSEWEWLKGALVTVDRDFGVLNTVFHHATDGHIVHHLFPTIPHYNAMEATKAVKPLMGEYYQYDATPFYVAMWREAKECLFVDRDEGEKGGVFWYKNKM.

The interval 1-25 (MGAGGCISVSETKPNQKNSLERAPY) is disordered. Residues 9 to 18 (VSETKPNQKN) show a composition bias toward polar residues. The next 2 membrane-spanning stretches (helical) occupy residues 52 to 72 (LSYV…TTYF) and 81 to 101 (ALAW…VWVI). The Histidine box-1 motif lies at 103–107 (HECGH). Residues 139–143 (HRRHH) carry the Histidine box-2 motif. 3 consecutive transmembrane segments (helical) span residues 177 to 197 (IGVL…FNVS), 223 to 243 (IYLS…AAMV), and 247 to 267 (VWLI…LVLV). The Histidine box-3 signature appears at 313–317 (HIVHH).

This sequence belongs to the fatty acid desaturase type 1 family.

Its subcellular location is the membrane. The enzyme catalyses a (9Z)-octadecenoyl-containing glycerolipid + 2 Fe(II)-[cytochrome b5] + O2 + 2 H(+) = a (9Z,12E)-octadecadienoyl-containing glycerolipid + 2 Fe(III)-[cytochrome b5] + 2 H2O. It carries out the reaction a (9Z)-hexadecenoyl-containing glycerolipid + 2 Fe(II)-[cytochrome b5] + O2 + 2 H(+) = a (9Z,12E)-hexadecadienoyl-containing glycerolipid + 2 Fe(III)-[cytochrome b5] + 2 H2O. In terms of biological role, involved in the biosynthesis of dimorphecolic acid (9-OH-18:2(10E,12E)). Converts oleic acid (18:1(9Z)) into 18:2(9Z,12E) and probably palmitoleic acid (16:1(9Z)) into 16:2(9Z,12E). Very limited ability to catalyze (Z)-delta(12) desaturation. This is Acyl-lipid (9+3)-(E)-desaturase from Dimorphotheca sinuata (African daisy).